We begin with the raw amino-acid sequence, 500 residues long: E3 ubiquitin-protein ligase TRIM4 (500 aa).

Residues Cys12 to Arg53 form an RING-type zinc finger. A B box-type zinc finger spans residues Val82–Ile123. Zn(2+)-binding residues include Cys87, His90, Cys109, and His115. The stretch at Glu212 to Val253 forms a coiled coil. Residues Lys288–Lys500 form the B30.2/SPRY domain.

The protein belongs to the TRIM/RBCC family. Homotrimer.

It is found in the cytoplasm. The catalysed reaction is S-ubiquitinyl-[E2 ubiquitin-conjugating enzyme]-L-cysteine + [acceptor protein]-L-lysine = [E2 ubiquitin-conjugating enzyme]-L-cysteine + N(6)-ubiquitinyl-[acceptor protein]-L-lysine.. Its pathway is protein modification; protein ubiquitination. Its function is as follows. E3 ubiquitin-protein ligase. Mediates 'Lys-63'-linked polyubiquitination of the innate immune receptor RIGI, this linkage doesn't lead to proteasomal degradation but seems to enhance IFN induction. This chain is E3 ubiquitin-protein ligase TRIM4 (TRIM4), found in Homo sapiens (Human).